We begin with the raw amino-acid sequence, 52 residues long: ATP synthase F(0) complex subunit 8 (52 aa).

A helical membrane pass occupies residues 10–30; that stretch reads LMTHLWAWLMLYLTTQKIKTF.

Belongs to the ATPase protein 8 family. In terms of assembly, component of the ATP synthase complex composed at least of ATP5F1A/subunit alpha, ATP5F1B/subunit beta, ATP5MC1/subunit c (homooctomer), MT-ATP6/subunit a, MT-ATP8/subunit 8, ATP5ME/subunit e, ATP5MF/subunit f, ATP5MG/subunit g, ATP5MK/subunit k, ATP5MJ/subunit j, ATP5F1C/subunit gamma, ATP5F1D/subunit delta, ATP5F1E/subunit epsilon, ATP5PF/subunit F6, ATP5PB/subunit b, ATP5PD/subunit d, ATP5PO/subunit OSCP. ATP synthase complex consists of a soluble F(1) head domain (subunits alpha(3) and beta(3)) - the catalytic core - and a membrane F(0) domain - the membrane proton channel (subunits c, a, 8, e, f, g, k and j). These two domains are linked by a central stalk (subunits gamma, delta, and epsilon) rotating inside the F1 region and a stationary peripheral stalk (subunits F6, b, d, and OSCP).

Its subcellular location is the mitochondrion membrane. Its function is as follows. Subunit 8, of the mitochondrial membrane ATP synthase complex (F(1)F(0) ATP synthase or Complex V) that produces ATP from ADP in the presence of a proton gradient across the membrane which is generated by electron transport complexes of the respiratory chain. ATP synthase complex consist of a soluble F(1) head domain - the catalytic core - and a membrane F(1) domain - the membrane proton channel. These two domains are linked by a central stalk rotating inside the F(1) region and a stationary peripheral stalk. During catalysis, ATP synthesis in the catalytic domain of F(1) is coupled via a rotary mechanism of the central stalk subunits to proton translocation. In vivo, can only synthesize ATP although its ATP hydrolase activity can be activated artificially in vitro. Part of the complex F(0) domain. This is ATP synthase F(0) complex subunit 8 from Lycodon semicarinatus (Ryukyu odd-tooth snake).